Here is a 75-residue protein sequence, read N- to C-terminus: MKTEIHPDYHTITVVMTDGTEYQTRSTWGKEGDKLNLDIDPKSHPAWTGGTQQVLDRGGRVSRFQKKFSGFLKKD.

Part of the 50S ribosomal subunit.

Its function is as follows. Binds the 23S rRNA. This Rhodopseudomonas palustris (strain ATCC BAA-98 / CGA009) protein is Large ribosomal subunit protein bL31.